The primary structure comprises 480 residues: Aspartyl/glutamyl-tRNA(Asn/Gln) amidotransferase subunit B (480 aa).

It belongs to the GatB/GatE family. GatB subfamily. As to quaternary structure, heterotrimer of A, B and C subunits.

It catalyses the reaction L-glutamyl-tRNA(Gln) + L-glutamine + ATP + H2O = L-glutaminyl-tRNA(Gln) + L-glutamate + ADP + phosphate + H(+). It carries out the reaction L-aspartyl-tRNA(Asn) + L-glutamine + ATP + H2O = L-asparaginyl-tRNA(Asn) + L-glutamate + ADP + phosphate + 2 H(+). Its function is as follows. Allows the formation of correctly charged Asn-tRNA(Asn) or Gln-tRNA(Gln) through the transamidation of misacylated Asp-tRNA(Asn) or Glu-tRNA(Gln) in organisms which lack either or both of asparaginyl-tRNA or glutaminyl-tRNA synthetases. The reaction takes place in the presence of glutamine and ATP through an activated phospho-Asp-tRNA(Asn) or phospho-Glu-tRNA(Gln). This is Aspartyl/glutamyl-tRNA(Asn/Gln) amidotransferase subunit B from Saccharophagus degradans (strain 2-40 / ATCC 43961 / DSM 17024).